A 458-amino-acid chain; its full sequence is Plant UBX domain-containing protein 2 (458 aa).

The disordered stretch occupies residues 1-103 (MDDVKDKLKG…APQDGFDPYG (103 aa)). Positions 44–54 (PIQNRFNSSQA) are enriched in polar residues. The segment covering 56 to 70 (NPTPRPKPNPNPLPE) has biased composition (pro residues). Residues 74-85 (SSSDQKISGSTR) show a composition bias toward polar residues. Residues 121–143 (FECPICKNPFTSEEEVSVHVESC) form a C2H2-type; atypical zinc finger. Residues 181–248 (SSIDVLLRLF…EIWAVMDVPS (68 aa)) form the PUB domain. The UBX domain occupies 349–433 (KRYKRSMIRV…ELVPSALIRF (85 aa)).

As to quaternary structure, interacts with CDC48A in vitro and co-fractionates with membrane-associated but not soluble CDC48A in vivo.

It localises to the membrane. Its function is as follows. Facilitates the interaction of SYP31 and CDC48A, thereby regulating an CDC48A membrane-associated function. Appears to act as a negative regulator mediating the powdery mildew-plant interaction. This chain is Plant UBX domain-containing protein 2, found in Arabidopsis thaliana (Mouse-ear cress).